We begin with the raw amino-acid sequence, 243 residues long: 3-deoxy-manno-octulosonate cytidylyltransferase (243 aa).

The protein belongs to the KdsB family.

The protein localises to the cytoplasm. It catalyses the reaction 3-deoxy-alpha-D-manno-oct-2-ulosonate + CTP = CMP-3-deoxy-beta-D-manno-octulosonate + diphosphate. It functions in the pathway nucleotide-sugar biosynthesis; CMP-3-deoxy-D-manno-octulosonate biosynthesis; CMP-3-deoxy-D-manno-octulosonate from 3-deoxy-D-manno-octulosonate and CTP: step 1/1. The protein operates within bacterial outer membrane biogenesis; lipopolysaccharide biosynthesis. Functionally, activates KDO (a required 8-carbon sugar) for incorporation into bacterial lipopolysaccharide in Gram-negative bacteria. The protein is 3-deoxy-manno-octulosonate cytidylyltransferase of Bartonella bacilliformis (strain ATCC 35685 / KC583 / Herrer 020/F12,63).